Reading from the N-terminus, the 592-residue chain is Hepatocyte nuclear factor 1-alpha-B (592 aa).

Positions 1–31 (MASQLSYLQQELLRALLESGVTKEALKKALA) are dimerization. Positions 1 to 32 (MASQLSYLQQELLRALLESGVTKEALKKALAD) constitute an HNF-p1 domain. Residues 54–78 (NCVQLPNGLGEPQMSEDESSDDGGD) form a disordered region. A compositionally biased stretch (acidic residues) spans 67–77 (MSEDESSDDGG). Residues 85-180 (KELERLSPEE…IARQFTHAGH (96 aa)) form the POU-specific atypical domain. Interaction with DNA stretches follow at residues 128 to 130 (QRE), 141 to 147 (HLSQHLN), 153 to 156 (KTQK), 201 to 204 (RFKW), 261 to 263 (RVY), and 268 to 271 (NSGK). A Nuclear localization signal motif is present at residues 195 to 203 (KKMRRNRFK). The homeobox; HNF1-type DNA-binding region spans 197–277 (MRRNRFKWGP…NSGKEEAFRH (81 aa)). Polar residues-rich tracts occupy residues 284-295 (YNGQQSSAQPLS) and 306-328 (RYTQDSSTDRSAAMANSQSTLSP). Disordered regions lie at residues 284–329 (YNGQ…LSPS) and 511–533 (KQVVSHHPTAHGDSPGSQLHNQD).

This sequence belongs to the HNF1 homeobox family. As to quaternary structure, binds DNA as dimer. Forms a homodimer or heterodimer with HNF1-alpha-A. Potentially also form a heterodimer with HNF1-beta. As to expression, liver.

The protein localises to the nucleus. Its function is as follows. Transcriptional activator that regulates the tissue specific expression of multiple genes, especially in pancreas and liver. Binds to the hepatocyte specific promoter element HP1. Binds to the inverted palindrome 5'-GTTAATNATTAAC-3'. The chain is Hepatocyte nuclear factor 1-alpha-B (hnf1a-b) from Xenopus laevis (African clawed frog).